The sequence spans 239 residues: Ribonuclease PH (239 aa).

Phosphate-binding positions include Arg87 and 125 to 127 (GTR).

It belongs to the RNase PH family. In terms of assembly, homohexameric ring arranged as a trimer of dimers.

The catalysed reaction is tRNA(n+1) + phosphate = tRNA(n) + a ribonucleoside 5'-diphosphate. Phosphorolytic 3'-5' exoribonuclease that plays an important role in tRNA 3'-end maturation. Removes nucleotide residues following the 3'-CCA terminus of tRNAs; can also add nucleotides to the ends of RNA molecules by using nucleoside diphosphates as substrates, but this may not be physiologically important. Probably plays a role in initiation of 16S rRNA degradation (leading to ribosome degradation) during starvation. In Pseudomonas paraeruginosa (strain DSM 24068 / PA7) (Pseudomonas aeruginosa (strain PA7)), this protein is Ribonuclease PH.